The chain runs to 77 residues: Conotoxin VnMEKL-023 (77 aa).

A signal peptide spans M1–A19. A propeptide spanning residues L20–S37 is cleaved from the precursor. Cystine bridges form between C51–C65, C58–C69, and C64–C74.

Belongs to the conotoxin O2 superfamily. Expressed by the venom duct.

The protein localises to the secreted. The polypeptide is Conotoxin VnMEKL-023 (Conus ventricosus (Mediterranean cone)).